We begin with the raw amino-acid sequence, 63 residues long: Large ribosomal subunit protein uL29 (63 aa).

This sequence belongs to the universal ribosomal protein uL29 family.

The protein is Large ribosomal subunit protein uL29 of Pseudoalteromonas atlantica (strain T6c / ATCC BAA-1087).